The chain runs to 658 residues: Scarecrow-like protein 28 (658 aa).

3 disordered regions span residues P43 to C85, L96 to R115, and P209 to R265. Residues E214–R228 show a composition bias toward low complexity. One can recognise a GRAS domain in the interval R265–T654. Positions F272 to H336 are leucine repeat I (LRI). Positions L355 to G420 are VHIID. A VHIID motif is present at residues V386–D390. Residues E430–M462 are leucine repeat II (LRII). Positions V471–N563 are PFYRE. The tract at residues A566 to T654 is SAW.

This sequence belongs to the GRAS family. Interacts with SNRNP35 and CYP95. As to expression, expressed in roots and sepals.

It is found in the nucleus. Its function is as follows. Probable transcription factor involved in plant development. The sequence is that of Scarecrow-like protein 28 (SCL28) from Arabidopsis thaliana (Mouse-ear cress).